A 251-amino-acid chain; its full sequence is Ubiquinone/menaquinone biosynthesis C-methyltransferase UbiE (251 aa).

S-adenosyl-L-methionine contacts are provided by residues Thr74, Asp95, and 123–124; that span reads NA.

It belongs to the class I-like SAM-binding methyltransferase superfamily. MenG/UbiE family.

It carries out the reaction a 2-demethylmenaquinol + S-adenosyl-L-methionine = a menaquinol + S-adenosyl-L-homocysteine + H(+). The enzyme catalyses a 2-methoxy-6-(all-trans-polyprenyl)benzene-1,4-diol + S-adenosyl-L-methionine = a 5-methoxy-2-methyl-3-(all-trans-polyprenyl)benzene-1,4-diol + S-adenosyl-L-homocysteine + H(+). The protein operates within quinol/quinone metabolism; menaquinone biosynthesis; menaquinol from 1,4-dihydroxy-2-naphthoate: step 2/2. It participates in cofactor biosynthesis; ubiquinone biosynthesis. Its function is as follows. Methyltransferase required for the conversion of demethylmenaquinol (DMKH2) to menaquinol (MKH2) and the conversion of 2-polyprenyl-6-methoxy-1,4-benzoquinol (DDMQH2) to 2-polyprenyl-3-methyl-6-methoxy-1,4-benzoquinol (DMQH2). The protein is Ubiquinone/menaquinone biosynthesis C-methyltransferase UbiE of Shewanella pealeana (strain ATCC 700345 / ANG-SQ1).